The following is a 309-amino-acid chain: tRNA uridine(34) hydroxylase (309 aa).

A Rhodanese domain is found at 130–224; sequence SDPDTIVIDT…YLEEVPQEES (95 aa). C184 serves as the catalytic Cysteine persulfide intermediate.

Belongs to the TrhO family.

The enzyme catalyses uridine(34) in tRNA + AH2 + O2 = 5-hydroxyuridine(34) in tRNA + A + H2O. Functionally, catalyzes oxygen-dependent 5-hydroxyuridine (ho5U) modification at position 34 in tRNAs. The protein is tRNA uridine(34) hydroxylase of Rhizobium etli (strain ATCC 51251 / DSM 11541 / JCM 21823 / NBRC 15573 / CFN 42).